The sequence spans 557 residues: Urocanate hydratase (557 aa).

NAD(+) contacts are provided by residues 48 to 49 (GG), Q126, 178 to 180 (GMG), D198, R203, 244 to 245 (NA), 265 to 269 (QTSAH), 274 to 275 (YL), and Y323. The active site involves C411. Position 493 (G493) interacts with NAD(+).

This sequence belongs to the urocanase family. The cofactor is NAD(+).

It localises to the cytoplasm. It carries out the reaction 4-imidazolone-5-propanoate = trans-urocanate + H2O. It participates in amino-acid degradation; L-histidine degradation into L-glutamate; N-formimidoyl-L-glutamate from L-histidine: step 2/3. Catalyzes the conversion of urocanate to 4-imidazolone-5-propionate. This Beutenbergia cavernae (strain ATCC BAA-8 / DSM 12333 / CCUG 43141 / JCM 11478 / NBRC 16432 / NCIMB 13614 / HKI 0122) protein is Urocanate hydratase.